The primary structure comprises 438 residues: Probable exopolygalacturonase B (438 aa).

A signal peptide spans 1 to 15 (MYLLPLTLFLTAAFG). N-linked (GlcNAc...) asparagine glycosylation is found at N118, N185, and N225. A PbH1 1 repeat occupies 209-248 (TNDVSFDNVYIHAFSTNASSDPANTDGMDSLDVDGVSFTN). The active-site Proton donor is the D255. The cysteines at positions 257 and 274 are disulfide-linked. N263 and N275 each carry an N-linked (GlcNAc...) asparagine glycan. H278 is an active-site residue. PbH1 repeat units follow at residues 295-316 (IENV…RLKA) and 327-348 (INNV…VLDQ). N-linked (GlcNAc...) asparagine glycans are attached at residues N302, N329, N354, and N366. C392 and C398 are disulfide-bonded. The PbH1 4 repeat unit spans residues 398-430 (CTNITLSNVNLTSPKGTAEIVCDDIQGGIGVDC). N-linked (GlcNAc...) asparagine glycosylation is found at N400 and N407.

This sequence belongs to the glycosyl hydrolase 28 family.

The protein localises to the secreted. It catalyses the reaction [(1-&gt;4)-alpha-D-galacturonosyl](n) + H2O = alpha-D-galacturonate + [(1-&gt;4)-alpha-D-galacturonosyl](n-1). Functionally, specific in hydrolyzing the terminal glycosidic bond of polygalacturonic acid and oligogalacturonates. This Aspergillus niger (strain ATCC MYA-4892 / CBS 513.88 / FGSC A1513) protein is Probable exopolygalacturonase B (pgxB).